We begin with the raw amino-acid sequence, 428 residues long: UPF0229 protein YeaH (428 aa).

Over residues 78–90 (GNDHFIQNDRIER) the composition is skewed to basic and acidic residues. The segment at 78–111 (GNDHFIQNDRIERPQGGGGGGSGSGQGQASQDGE) is disordered. A compositionally biased stretch (gly residues) spans 92–103 (QGGGGGGSGSGQ).

It belongs to the UPF0229 family.

The protein is UPF0229 protein YeaH of Salmonella choleraesuis (strain SC-B67).